The primary structure comprises 535 residues: T-complex protein 1 subunit zeta 2 (535 aa).

This sequence belongs to the TCP-1 chaperonin family. Heterooligomeric complex of about 850 to 900 kDa that forms two stacked rings, 12 to 16 nm in diameter.

The protein localises to the cytoplasm. Molecular chaperone; assists the folding of proteins upon ATP hydrolysis. Known to play a role, in vitro, in the folding of actin and tubulin. In Arabidopsis thaliana (Mouse-ear cress), this protein is T-complex protein 1 subunit zeta 2.